Here is a 428-residue protein sequence, read N- to C-terminus: C4-dicarboxylate transport protein (428 aa).

The next 9 membrane-spanning stretches (helical) occupy residues 7 to 27 (SLYF…IVAP), 40 to 60 (FIKL…VLGI), 75 to 95 (LALL…LLIV), 143 to 163 (AFAR…GIAL), 196 to 216 (PIGA…GSLF), 221 to 241 (LMAT…GAIA), 306 to 326 (IYLT…MTLG), 329 to 349 (FTLL…TGSG), and 351 to 371 (IVLA…LALI).

The protein belongs to the dicarboxylate/amino acid:cation symporter (DAACS) (TC 2.A.23) family.

It localises to the cell inner membrane. In terms of biological role, responsible for the transport of dicarboxylates such as succinate, fumarate, and malate from the periplasm across the membrane. This Solibacter usitatus (strain Ellin6076) protein is C4-dicarboxylate transport protein.